Here is a 965-residue protein sequence, read N- to C-terminus: Iron-responsive element-binding protein 2 (965 aa).

Residues 142–170 (NAPNPGGGEAQKPTAKLSPLKGQPRKLPC) are disordered. [4Fe-4S] cluster is bound by residues Cys-514, Cys-580, and Cys-583.

This sequence belongs to the aconitase/IPM isomerase family. The cofactor is [4Fe-4S] cluster. In terms of processing, ubiquitinated and degraded by the proteasome in presence of high level of iron and oxygen.

It is found in the cytoplasm. Its function is as follows. RNA-binding protein that binds to iron-responsive elements (IRES), which are stem-loop structures found in the 5'-UTR of ferritin, and delta aminolevulinic acid synthase mRNAs, and in the 3'-UTR of transferrin receptor mRNA. Binding to the IRE element in ferritin results in the repression of its mRNA translation. Binding of the protein to the transferrin receptor mRNA inhibits the degradation of this otherwise rapidly degraded mRNA. The polypeptide is Iron-responsive element-binding protein 2 (IREB2) (Gallus gallus (Chicken)).